We begin with the raw amino-acid sequence, 50 residues long: Photosystem II reaction center protein M (50 aa).

Residues 6 to 26 (FGFVASLLFVGVPTIFLIGLF) form a helical membrane-spanning segment.

Belongs to the PsbM family. In terms of assembly, PSII is composed of 1 copy each of membrane proteins PsbA, PsbB, PsbC, PsbD, PsbE, PsbF, PsbH, PsbI, PsbJ, PsbK, PsbL, PsbM, PsbT, PsbX, PsbY, Psb30/Ycf12, peripheral proteins PsbO, CyanoQ (PsbQ), PsbU, PsbV and a large number of cofactors. It forms dimeric complexes.

It is found in the cellular thylakoid membrane. In terms of biological role, one of the components of the core complex of photosystem II (PSII). PSII is a light-driven water:plastoquinone oxidoreductase that uses light energy to abstract electrons from H(2)O, generating O(2) and a proton gradient subsequently used for ATP formation. It consists of a core antenna complex that captures photons, and an electron transfer chain that converts photonic excitation into a charge separation. This subunit is found at the monomer-monomer interface. The chain is Photosystem II reaction center protein M from Prochlorococcus marinus (strain MIT 9215).